The sequence spans 108 residues: Protein U4 (108 aa).

The helical transmembrane segment at F5–V25 threads the bilayer.

Belongs to the nanovirus U4 protein family.

The protein localises to the membrane. This chain is Protein U4 (DNA-U4), found in Astragalus sinicus (Chinese milk vetch).